A 171-amino-acid chain; its full sequence is Putative charged multivesicular body protein 4B-like protein CHMP4BP1 (171 aa).

Basic and acidic residues predominate over residues 1–17 (MLSKKQEFLEKKIEQRH). 2 disordered regions span residues 1 to 24 (MLSK…NKPA) and 132 to 171 (EQEE…KTTT).

Belongs to the SNF7 family.

The protein is Putative charged multivesicular body protein 4B-like protein CHMP4BP1 (CHMP4BP1) of Homo sapiens (Human).